The primary structure comprises 153 residues: Large ribosomal subunit protein uL13 (153 aa).

The protein belongs to the universal ribosomal protein uL13 family. In terms of assembly, part of the 50S ribosomal subunit.

Its function is as follows. This protein is one of the early assembly proteins of the 50S ribosomal subunit, although it is not seen to bind rRNA by itself. It is important during the early stages of 50S assembly. In Chelativorans sp. (strain BNC1), this protein is Large ribosomal subunit protein uL13.